Here is a 78-residue protein sequence, read N- to C-terminus: Large ribosomal subunit protein bL28 (78 aa).

The tract at residues Met1–Arg28 is disordered.

This sequence belongs to the bacterial ribosomal protein bL28 family.

This chain is Large ribosomal subunit protein bL28, found in Corynebacterium urealyticum (strain ATCC 43042 / DSM 7109).